The chain runs to 327 residues: CREB homolog crh-1 (327 aa).

Residues 16 to 75 (SPLMMLLFKALQEGGDSEDEARRRREQLNRRPSYRMILKDLETADKVMKKEPEETPPSSV) form the KID domain. Disordered stretches follow at residues 27 to 114 (QEGG…SPYG) and 151 to 200 (KVFP…VQSL). Over residues 35 to 44 (EARRRREQLN) the composition is skewed to basic and acidic residues. Phosphoserine is present on serine 48. The span at 52–68 (ILKDLETADKVMKKEPE) shows a compositional bias: basic and acidic residues. Residues 71-84 (PPSSVDASPLQFQS) are compositionally biased toward polar residues. Positions 161–172 (GLGGGGGGGGVP) are enriched in gly residues. Residues 173–199 (GPSSGIAGMSVQPPTSSTPSQQQSVQS) show a composition bias toward low complexity. The region spanning 266–317 (NRKRQVRLLKNREAAKECRRKKKEYVKCLENRVSVLENQNKALIEELKTLKE) is the bZIP domain. Residues 267-292 (RKRQVRLLKNREAAKECRRKKKEYVK) are basic motif. A coiled-coil region spans residues 284–318 (RRKKKEYVKCLENRVSVLENQNKALIEELKTLKEL). Positions 294 to 315 (LENRVSVLENQNKALIEELKTL) are leucine-zipper.

It belongs to the bZIP family. In terms of assembly, interacts with CREB-regulated transcription coactivator homolog crtc-1. In terms of processing, transcriptional activity is enhanced by phosphorylation. Phosphorylated by cmk-1. In terms of tissue distribution, expressed widely, including in head neurons AFD, gustatory neurons ASE, the olfactory neurons AWC, and in the ASI sensory neurons, as well as in the intestine and gonads in hermaphrodites.

The protein resides in the nucleus. Transcription factor. Transcriptional activity probably positively regulated by phosphorylation. Modulates expression of target genes, acting by binding to regulatory cAMP response elements (CRE). Acts downstream of the calcium-triggered CaMKK-CaMK1 signaling cascade, consisting of the protein kinase kinase ckk-1 and the protein kinase cmk-1. Plays a role in learning and memory, feeding behavior, stress response, entry into the dauer stage and modulation of lifespan. Involved in commitment to the developmentally arrested larval state known as dauer, acting by positively regulating the expression of dauer-inhibiting TGF-beta-like daf-7 in the ASI neurons. Plays a role in both associative and non-associative long-term memory (LTM). Involved in modulating feeding behavior, acting by regulating transcription of tryptophan hydroxylase tph-1 in serotonergic ADF neurons. Regulates transcription of genes involved in endoplasmic reticulum (ER) stress. Involved in modulation of lifespan, in response to raised temperature, but independently of the heat-shock response pathway, acting by regulating transcription of FMRFamide-like neuropeptides flp-6 in the AFD neuron. Functionally, plays a role in associative long-term memory (LTM) and learning. In terms of biological role, plays a role in associative long-term memory (LTM) and learning; perhaps required at the time of acquisition and/or the consolidation phase of memory formation. The polypeptide is CREB homolog crh-1 (Caenorhabditis elegans).